Consider the following 326-residue polypeptide: MAVYIAREATKLWRKVCAEIAVELQLLFEKWRLLLAGLVFQYIHGLAARGVHYLHRPGPLLQDLGFMALPELGQDKGYVSESVFTFIFISFLLWSFHPFIYHSKRFYTVLLWRRVLAFLVASQFLRIITFYSTQLPGPNYHCREGSKMATLPPPHNVLEVLLINFPRGVLFGCGDLIFSSHMIFTLVFVRTYHKYGSKRLIKILAWLMAIIQSLLIIASRKHYSVDVVVAWYTVNLVVFFIDNKLPEMPDRTNGSSLLPVTAKDKDGRTKEELHKLEKDCKMKEEFHKLLNGNTVDSTDRRQRVQMNGKHGEDINHTLSDATPNGT.

A run of 6 helical transmembrane segments spans residues 33-53 (LLLA…GVHY), 82-102 (SVFT…FIYH), 115-135 (VLAF…STQL), 169-189 (VLFG…LVFV), 199-219 (RLIK…IIAS), and 222-242 (HYSV…FFID). His-181 is an active-site residue. Residues His-222 and Asp-226 contribute to the active site. A disordered region spans residues 306–326 (MNGKHGEDINHTLSDATPNGT). A compositionally biased stretch (polar residues) spans 316 to 326 (HTLSDATPNGT).

This sequence belongs to the sphingomyelin synthase family.

It localises to the golgi apparatus. It is found in the trans-Golgi network membrane. Catalyzes the transfer of the phosphorylinositol group from phosphatidylinositol (PI) to phytoceramide, an essential step in sphingolipid biosynthesis. May play an important role in modulating plant programmed cell death (PCD) associated with defense (e.g. toward Golovinomyces cichoracearum) by promoting sphingolipid metabolism and regulating ceramide accumulation. The sequence is that of Phosphatidylinositol:ceramide inositolphosphotransferase (ERH1) from Oryza sativa subsp. indica (Rice).